The primary structure comprises 63 residues: Large ribosomal subunit protein uL29 (63 aa).

Belongs to the universal ribosomal protein uL29 family.

This chain is Large ribosomal subunit protein uL29, found in Enterobacter sp. (strain 638).